We begin with the raw amino-acid sequence, 104 residues long: Large ribosomal subunit protein uL23 (104 aa).

Belongs to the universal ribosomal protein uL23 family. In terms of assembly, part of the 50S ribosomal subunit. Contacts protein L29, and trigger factor when it is bound to the ribosome.

Functionally, one of the early assembly proteins it binds 23S rRNA. One of the proteins that surrounds the polypeptide exit tunnel on the outside of the ribosome. Forms the main docking site for trigger factor binding to the ribosome. This Polynucleobacter necessarius subsp. necessarius (strain STIR1) protein is Large ribosomal subunit protein uL23.